Here is a 220-residue protein sequence, read N- to C-terminus: Uracil-DNA glycosylase (220 aa).

The active-site Proton acceptor is D61.

The protein belongs to the uracil-DNA glycosylase (UDG) superfamily. UNG family.

Its subcellular location is the cytoplasm. It carries out the reaction Hydrolyzes single-stranded DNA or mismatched double-stranded DNA and polynucleotides, releasing free uracil.. Its function is as follows. Excises uracil residues from the DNA which can arise as a result of misincorporation of dUMP residues by DNA polymerase or due to deamination of cytosine. The sequence is that of Uracil-DNA glycosylase from Pseudoalteromonas translucida (strain TAC 125).